A 406-amino-acid chain; its full sequence is Endo-xylogalacturonan hydrolase A (406 aa).

The N-terminal stretch at 1-18 (MALYRNLYLLASLGLSSA) is a signal peptide. PbH1 repeat units lie at residues 183–213 (ATNVVFSNLKMDANSKSDNPPKNTDGFDIGE), 214–257 (STYV…SVGS), 266–289 (VKNIYVTGATMINSTKAAGIKTYP), 299–320 (VSNVTFNDFTVDNSDYAFQIQS), and 333–375 (PGNA…SISG). The Proton donor role is filled by aspartate 228. Residue histidine 251 is part of the active site. Asparagine 278 and asparagine 301 each carry an N-linked (GlcNAc...) asparagine glycan.

This sequence belongs to the glycosyl hydrolase 28 family.

It localises to the secreted. In terms of biological role, pectinolytic enzyme involved in the degradation of xylogalacturonan (xga), a galacturonan backbone heavily substituted with xylose, and which is one important component of the hairy regions of pectin. Activity requires a galacturonic acid backbone substituted with xylose. In Aspergillus tubingensis, this protein is Endo-xylogalacturonan hydrolase A (xghA).